The primary structure comprises 179 residues: Large ribosomal subunit protein uL5 (179 aa).

This sequence belongs to the universal ribosomal protein uL5 family. Part of the 50S ribosomal subunit; part of the 5S rRNA/L5/L18/L25 subcomplex. Contacts the 5S rRNA and the P site tRNA. Forms a bridge to the 30S subunit in the 70S ribosome.

This is one of the proteins that bind and probably mediate the attachment of the 5S RNA into the large ribosomal subunit, where it forms part of the central protuberance. In the 70S ribosome it contacts protein S13 of the 30S subunit (bridge B1b), connecting the 2 subunits; this bridge is implicated in subunit movement. Contacts the P site tRNA; the 5S rRNA and some of its associated proteins might help stabilize positioning of ribosome-bound tRNAs. The polypeptide is Large ribosomal subunit protein uL5 (Ectopseudomonas mendocina (strain ymp) (Pseudomonas mendocina)).